Here is a 747-residue protein sequence, read N- to C-terminus: Mitochondrial inner membrane i-AAA protease supercomplex subunit YME1 (747 aa).

Positions 51-64 (KNSGEMPPKKEADS) are enriched in basic and acidic residues. The tract at residues 51-92 (KNSGEMPPKKEADSSGKASNKSTISSIDNSQPPPPSNTNDKT) is disordered. The segment covering 66–80 (GKASNKSTISSIDNS) has biased composition (polar residues). 321–328 (GPPGTGKT) provides a ligand contact to ATP. Histidine 540 is a binding site for Zn(2+). The active site involves glutamate 541. Residues histidine 544 and aspartate 618 each coordinate Zn(2+). The tract at residues 718–747 (STNTVVEGPDSDERKDIGDDKPKIPTMLNA) is disordered. Over residues 728 to 740 (SDERKDIGDDKPK) the composition is skewed to basic and acidic residues.

The protein in the N-terminal section; belongs to the AAA ATPase family. This sequence in the C-terminal section; belongs to the peptidase M41 family. In terms of assembly, component of the mitochondrial inner membrane i-AAA protease supercomplex composed of MGR1, MGR3 and YME1. Interacts directly with MGR1. Requires Zn(2+) as cofactor.

It is found in the mitochondrion inner membrane. Functionally, catalytic subunit of the mitochondrial inner membrane i-AAA protease supercomplex required for mitochondrial inner membrane protein turnover. The protease is probably ATP-dependent. Important to maintain the integrity of the mitochondrial compartment. Required both for the degradation of unassembled subunit 2 of cytochrome c oxidase (COX2) and for efficient assembly of mitochondrial respiratory chain. Binds unfolded substrates in an ATPase-independent manner; binding of folded COX2, a physiological substrate, requires an active ATPase but when COX2 is destabilized an active ATPase is no longer necessary. May process ATG32. In Saccharomyces cerevisiae (strain ATCC 204508 / S288c) (Baker's yeast), this protein is Mitochondrial inner membrane i-AAA protease supercomplex subunit YME1 (YME1).